The chain runs to 760 residues: UDP-N-acetylmuramoyl-L-alanyl-D-glutamate--2,6-diaminopimelate ligase MurE homolog, chloroplastic (760 aa).

A chloroplast-targeting transit peptide spans 1–59; that stretch reads MATAPLAFRLPFPFSFPSASRPPPSRILAPPTPRRLPLRLAAAAARRFRPPTADDEPPE. Disordered stretches follow at residues 13–159 and 176–205; these read PFSF…TDEL and LSVV…DEDG. The segment covering 20 to 34 has biased composition (pro residues); that stretch reads SRPPPSRILAPPTPR. The span at 53 to 62 shows a compositional bias: acidic residues; it reads ADDEPPEAAE. A compositionally biased stretch (basic and acidic residues) spans 118-132; sequence EIDRAIAEKREEFTR. Acidic residues-rich tracts occupy residues 150 to 159 and 182 to 205; these read PEDEDLTDEL and ADEE…DEDG.

It belongs to the MurCDEF family. MurE subfamily. In terms of assembly, component of the plastid-encoded plastid RNA polymerase (PEP) complex.

It is found in the plastid. Its subcellular location is the chloroplast. In terms of biological role, required for the activity of the plastid-encoded RNA polymerase (PEP) and full expression of genes transcribed by PEP. Required for the proper build-up and formation of the PEP-complex. This chain is UDP-N-acetylmuramoyl-L-alanyl-D-glutamate--2,6-diaminopimelate ligase MurE homolog, chloroplastic, found in Zea mays (Maize).